A 232-amino-acid chain; its full sequence is 2,3-bisphosphoglycerate-dependent phosphoglycerate mutase (232 aa).

Substrate contacts are provided by residues 8–15 (RHGESLWN), 21–22 (TG), Arg60, 87–90 (ERHY), Lys98, 114–115 (RR), and 183–184 (GN). The active-site Tele-phosphohistidine intermediate is the His9. Glu87 functions as the Proton donor/acceptor in the catalytic mechanism.

It belongs to the phosphoglycerate mutase family. BPG-dependent PGAM subfamily.

The catalysed reaction is (2R)-2-phosphoglycerate = (2R)-3-phosphoglycerate. It functions in the pathway carbohydrate degradation; glycolysis; pyruvate from D-glyceraldehyde 3-phosphate: step 3/5. In terms of biological role, catalyzes the interconversion of 2-phosphoglycerate and 3-phosphoglycerate. The protein is 2,3-bisphosphoglycerate-dependent phosphoglycerate mutase of Clostridium beijerinckii (strain ATCC 51743 / NCIMB 8052) (Clostridium acetobutylicum).